The primary structure comprises 340 residues: Phenylalanine--tRNA ligase alpha subunit (340 aa).

Mg(2+) is bound at residue E255.

It belongs to the class-II aminoacyl-tRNA synthetase family. Phe-tRNA synthetase alpha subunit type 1 subfamily. As to quaternary structure, tetramer of two alpha and two beta subunits. The cofactor is Mg(2+).

It localises to the cytoplasm. It carries out the reaction tRNA(Phe) + L-phenylalanine + ATP = L-phenylalanyl-tRNA(Phe) + AMP + diphosphate + H(+). The chain is Phenylalanine--tRNA ligase alpha subunit from Desulfitobacterium hafniense (strain DSM 10664 / DCB-2).